The primary structure comprises 393 residues: tRNA(Met) cytidine acetate ligase (393 aa).

Positions 81, 142, and 167 each coordinate ATP.

It belongs to the TmcAL family.

It localises to the cytoplasm. The enzyme catalyses cytidine(34) in elongator tRNA(Met) + acetate + ATP = N(4)-acetylcytidine(34) in elongator tRNA(Met) + AMP + diphosphate. Its function is as follows. Catalyzes the formation of N(4)-acetylcytidine (ac(4)C) at the wobble position of elongator tRNA(Met), using acetate and ATP as substrates. First activates an acetate ion to form acetyladenylate (Ac-AMP) and then transfers the acetyl group to tRNA to form ac(4)C34. The polypeptide is tRNA(Met) cytidine acetate ligase (Bacillus thuringiensis (strain Al Hakam)).